Here is a 418-residue protein sequence, read N- to C-terminus: Trimethyllysine dioxygenase, mitochondrial (418 aa).

3 residues coordinate Fe cation: His-239, Asp-241, and His-386.

Belongs to the gamma-BBH/TMLD family. As to quaternary structure, homodimer. Requires Fe(2+) as cofactor. It depends on L-ascorbate as a cofactor.

The protein localises to the mitochondrion matrix. It catalyses the reaction N(6),N(6),N(6)-trimethyl-L-lysine + 2-oxoglutarate + O2 = (3S)-3-hydroxy-N(6),N(6),N(6)-trimethyl-L-lysine + succinate + CO2. Its pathway is amine and polyamine biosynthesis; carnitine biosynthesis. In terms of biological role, converts trimethyllysine (TML) into hydroxytrimethyllysine (HTML). The protein is Trimethyllysine dioxygenase, mitochondrial (TMLHE) of Gallus gallus (Chicken).